Consider the following 120-residue polypeptide: NAD(P)H-quinone oxidoreductase subunit 3, chloroplastic (120 aa).

The next 3 helical transmembrane spans lie at 9 to 29, 64 to 84, and 88 to 108; these read IFWAFLIISSLIPILVFFISG, MFALVFVVFDVETVFLYPWAM, and VLGVSVFVEALIFVLILIVGL.

The protein belongs to the complex I subunit 3 family. As to quaternary structure, NDH is composed of at least 16 different subunits, 5 of which are encoded in the nucleus.

It localises to the plastid. The protein localises to the chloroplast thylakoid membrane. It catalyses the reaction a plastoquinone + NADH + (n+1) H(+)(in) = a plastoquinol + NAD(+) + n H(+)(out). It carries out the reaction a plastoquinone + NADPH + (n+1) H(+)(in) = a plastoquinol + NADP(+) + n H(+)(out). NDH shuttles electrons from NAD(P)H:plastoquinone, via FMN and iron-sulfur (Fe-S) centers, to quinones in the photosynthetic chain and possibly in a chloroplast respiratory chain. The immediate electron acceptor for the enzyme in this species is believed to be plastoquinone. Couples the redox reaction to proton translocation, and thus conserves the redox energy in a proton gradient. This chain is NAD(P)H-quinone oxidoreductase subunit 3, chloroplastic, found in Lactuca sativa (Garden lettuce).